Here is an 875-residue protein sequence, read N- to C-terminus: MEPGPAHRRRRPAVACSECRRRKIRCDRGFPCGPCRKSLPALSCIYHSQPRAYAASAPPRPHTAQHQPRPKVNNTHSVDLTKFNLPSFESDAFHGLDQFGIDWQPSWEHQITPPTGHLADAGADYFQSPTFSVIDDHEKKESTNHSRARQGYPGSTETINPGSVSHSAGVNPDSGDDRWYQILARIGKVEYLIRDITRHQSSDEAQLVPILRDLYEAEPDECLRLPPLSGIVLKLENQARLQKQQDDKQSLARLSPLLDASSKIHQLLPPRQACKKLVSAYFETFGSVLCILDTAVFTSEFERFWEAIDASRVPSTDHEEAFAHKLLVVIALGSVTCPSSPGAASSEAERARQTSRRNHAIMCVQHTRQWLAQKTARGIRADLDVAQILCLLALARQTQLHTDPWPRRPSMDGTVILTGDHDLARLGMQMGLHREPRTGSMAKPAKEAETELRRRLWATMLELSLHQYLDAELPPPLGADSYDCATPSSNGVEEEPRSYFVPDSLRVPASTVLAALSRTQRLRLRVLEHLHASGASKDIQESQRLAIELSQAFNSEVNSLLSPASTQPTSFQLWLLNVFVRPFILALGVPLSGESRNRFADYYLRRLRLENAVAMLRPGPHEDGPRSIQSQISSHAGQTGSRTKTAATAYPFLPTPGTAEPCNTSSEQHFGTHKAACTSLYIGGPSYYAVVHRQVVASLCADVVAEIEDDMFPNLDAAMLHRIVAILEDAVNEYRDQVHASAGAHACHEFILFAAAHSLALASLNRSSAREVKESVMSSVWMALHHCCQAMGEPAEAMLETEWGTEAVQQTATESQSVNRSVSDADKGYEIDAQLQGVKYMLQQQSDAASTADGEIADMWAFDDDESYLSVGLPL.

The segment at residues 16-44 is a DNA-binding region (zn(2)-C6 fungal-type); sequence CSECRRRKIRCDRGFPCGPCRKSLPALSC. Disordered stretches follow at residues 54-73, 136-172, and 620-642; these read AASAPPRPHTAQHQPRPKVN, DHEKKESTNHSRARQGYPGSTETINPGSVSHSAGVNP, and PHEDGPRSIQSQISSHAGQTGSR. Polar residues-rich tracts occupy residues 153–168 and 627–642; these read PGSTETINPGSVSHSA and SIQSQISSHAGQTGSR.

The protein resides in the nucleus. Functionally, transcription factor that positively regulates the expression of the genes that mediate the biosynthesis of tenellin-type 2-pyridones, iron-chelating compounds involved in iron stress tolerance, competition with the natural competitor fungus Metarhizium robertsii and insect hosts infection. This Beauveria bassiana (strain ARSEF 2860) (White muscardine disease fungus) protein is Transcription factor tenR.